The sequence spans 701 residues: Polyribonucleotide nucleotidyltransferase (701 aa).

Residues Asp-485 and Asp-491 each coordinate Mg(2+). The KH domain occupies 552–611 (PKIFKTTVDPEKIRDIIGPGGKMINKIIAETNVKIDIEPDGRIFVAAPDDISGNRAISMI). Residues 621–689 (GQFFLGKVTR…KLGRLSLSRK (69 aa)) enclose the S1 motif domain.

The protein belongs to the polyribonucleotide nucleotidyltransferase family. It depends on Mg(2+) as a cofactor.

The protein localises to the cytoplasm. It carries out the reaction RNA(n+1) + phosphate = RNA(n) + a ribonucleoside 5'-diphosphate. Involved in mRNA degradation. Catalyzes the phosphorolysis of single-stranded polyribonucleotides processively in the 3'- to 5'-direction. The polypeptide is Polyribonucleotide nucleotidyltransferase (Caldicellulosiruptor bescii (strain ATCC BAA-1888 / DSM 6725 / KCTC 15123 / Z-1320) (Anaerocellum thermophilum)).